The primary structure comprises 617 residues: Dihydroxy-acid dehydratase (617 aa).

Aspartate 81 is a Mg(2+) binding site. Cysteine 122 contacts [2Fe-2S] cluster. Residues aspartate 123 and lysine 124 each contribute to the Mg(2+) site. Residue lysine 124 is modified to N6-carboxylysine. Cysteine 197 is a [2Fe-2S] cluster binding site. Residue glutamate 494 participates in Mg(2+) binding. Serine 520 functions as the Proton acceptor in the catalytic mechanism.

It belongs to the IlvD/Edd family. In terms of assembly, homodimer. [2Fe-2S] cluster serves as cofactor. Mg(2+) is required as a cofactor.

The enzyme catalyses (2R)-2,3-dihydroxy-3-methylbutanoate = 3-methyl-2-oxobutanoate + H2O. The catalysed reaction is (2R,3R)-2,3-dihydroxy-3-methylpentanoate = (S)-3-methyl-2-oxopentanoate + H2O. The protein operates within amino-acid biosynthesis; L-isoleucine biosynthesis; L-isoleucine from 2-oxobutanoate: step 3/4. It participates in amino-acid biosynthesis; L-valine biosynthesis; L-valine from pyruvate: step 3/4. Functions in the biosynthesis of branched-chain amino acids. Catalyzes the dehydration of (2R,3R)-2,3-dihydroxy-3-methylpentanoate (2,3-dihydroxy-3-methylvalerate) into 2-oxo-3-methylpentanoate (2-oxo-3-methylvalerate) and of (2R)-2,3-dihydroxy-3-methylbutanoate (2,3-dihydroxyisovalerate) into 2-oxo-3-methylbutanoate (2-oxoisovalerate), the penultimate precursor to L-isoleucine and L-valine, respectively. The chain is Dihydroxy-acid dehydratase from Frankia casuarinae (strain DSM 45818 / CECT 9043 / HFP020203 / CcI3).